We begin with the raw amino-acid sequence, 192 residues long: MNESPAPHPLKQRLGGRNLYLVGMMASGKSSTGRPLAEQLSYGFVDTDAVIEQLAGQPIPKIFSEEGEAGFRTMESQVLNAIGQRHSLVVATGGGIVSKPENWGVLHQGIVIWLNPGREELLRRLNADSGNRPLLQTEDPEAAFDCLFAERLPLYCEADLHVEVGAEEPDGIALKIIEFLPQLLSPPPQMNG.

26 to 31 contributes to the ATP binding site; sequence ASGKSS. Ser30 lines the Mg(2+) pocket. Residues Asp48, Arg72, and Gly94 each contribute to the substrate site. Arg132 is an ATP binding site. Arg151 lines the substrate pocket.

It belongs to the shikimate kinase family. In terms of assembly, monomer. It depends on Mg(2+) as a cofactor.

The protein resides in the cytoplasm. The catalysed reaction is shikimate + ATP = 3-phosphoshikimate + ADP + H(+). It functions in the pathway metabolic intermediate biosynthesis; chorismate biosynthesis; chorismate from D-erythrose 4-phosphate and phosphoenolpyruvate: step 5/7. Functionally, catalyzes the specific phosphorylation of the 3-hydroxyl group of shikimic acid using ATP as a cosubstrate. The protein is Shikimate kinase of Prochlorococcus marinus (strain MIT 9313).